The primary structure comprises 151 residues: SsrA-binding protein (151 aa).

It belongs to the SmpB family.

Its subcellular location is the cytoplasm. Required for rescue of stalled ribosomes mediated by trans-translation. Binds to transfer-messenger RNA (tmRNA), required for stable association of tmRNA with ribosomes. tmRNA and SmpB together mimic tRNA shape, replacing the anticodon stem-loop with SmpB. tmRNA is encoded by the ssrA gene; the 2 termini fold to resemble tRNA(Ala) and it encodes a 'tag peptide', a short internal open reading frame. During trans-translation Ala-aminoacylated tmRNA acts like a tRNA, entering the A-site of stalled ribosomes, displacing the stalled mRNA. The ribosome then switches to translate the ORF on the tmRNA; the nascent peptide is terminated with the 'tag peptide' encoded by the tmRNA and targeted for degradation. The ribosome is freed to recommence translation, which seems to be the essential function of trans-translation. This Chlamydia trachomatis serovar A (strain ATCC VR-571B / DSM 19440 / HAR-13) protein is SsrA-binding protein.